A 506-amino-acid polypeptide reads, in one-letter code: Steroid (22S)-hydroxylase (506 aa).

Residues leucine 12–alanine 32 form a helical membrane-spanning segment. A heme-binding site is contributed by cysteine 449.

Belongs to the cytochrome P450 family. Heme is required as a cofactor.

The protein localises to the membrane. It carries out the reaction a C28-steroid + reduced [NADPH--hemoprotein reductase] + O2 = a (22S)-22-hydroxy C28-steroid + oxidized [NADPH--hemoprotein reductase] + H2O + H(+). The enzyme catalyses campesterol + reduced [NADPH--hemoprotein reductase] + O2 = (22S)-22-hydroxycampesterol + oxidized [NADPH--hemoprotein reductase] + H2O + H(+). It catalyses the reaction campestanol + reduced [NADPH--hemoprotein reductase] + O2 = 6-deoxycathasterone + oxidized [NADPH--hemoprotein reductase] + H2O + H(+). The protein operates within plant hormone biosynthesis; brassinosteroid biosynthesis. Catalyzes the C22-alpha-hydroxylation step in brassinosteroid biosynthesis, which is the rate-limiting step in this biosynthetic pathway. Catalyzes the conversion of campesterol (CR) to (22S)-22-hydroxycampesterol (22-OHCR, 22-hydroxyCR) and of campestanol (CN) to 6-deoxocathasterone (6-deoxoCT). In Oryza sativa subsp. indica (Rice), this protein is Steroid (22S)-hydroxylase.